Consider the following 408-residue polypeptide: Putative odorant receptor 92a (408 aa).

Topologically, residues 1 to 52 are cytoplasmic; the sequence is MLFRKRKPKSDDEVITFDELTRFPMTFYKTIGEDLYSDRDPNVIRRYLLRFY. Residues 53–73 traverse the membrane as a helical segment; it reads LVLGFLNFNAYVVGEIAYFIV. Residue His74 is a topological domain, extracellular. Residues 75–95 form a helical membrane-spanning segment; the sequence is IMSTTTLLEATAVAPCIGFSF. Topologically, residues 96-144 are cytoplasmic; the sequence is MADFKQFGLTVNRKRLVRLLDDLKEIFPLDLEAQRKYNVSFYRKHMNRV. A helical membrane pass occupies residues 145-165; it reads MTLFTILCMTYTSSFSFYPAI. The Extracellular portion of the chain corresponds to 166 to 209; it reads KSTIKYYLMGSEIFERNYGFHILFPYDAETDLTVYWFSYWGLAH. Residues 210–230 form a helical membrane-spanning segment; the sequence is CAYVAGVSYVCVDLLLIATIT. Residues 231-276 are Cytoplasmic-facing; that stretch reads QLTMHFNFIANDLEAYEGGDHTDEENIKYLHNLVVYHARALDLSEE. The chain crosses the membrane as a helical span at residues 277–301; the sequence is VNNIFSFLILWNFIAASLVICFAGF. Residues 302–310 lie on the Extracellular side of the membrane; sequence QITASNVED. Residues 311 to 331 traverse the membrane as a helical segment; sequence IVLYFIFFSASLVQVFVVCYY. Topologically, residues 332–378 are cytoplasmic; it reads GDEMISSSSRIGHSAFNQNWLPCSTKYKRILQFIIARSQKPASIRPP. The helical transmembrane segment at 379 to 399 threads the bilayer; the sequence is TFPPISFNTFMKVISMSYQFF. Topologically, residues 400-408 are extracellular; that stretch reads ALLRTTYYG.

It belongs to the insect chemoreceptor superfamily. Heteromeric odorant receptor channel (TC 1.A.69) family. Or49a subfamily. In terms of assembly, interacts with Orco. Complexes exist early in the endomembrane system in olfactory sensory neurons (OSNs), coupling these complexes to the conserved ciliary trafficking pathway.

It localises to the cell membrane. Functionally, odorant receptor which mediates acceptance or avoidance behavior, depending on its substrates. The odorant receptor repertoire encodes a large collection of odor stimuli that vary widely in identity, intensity, and duration. May form a complex with Orco to form odorant-sensing units, providing sensitive and prolonged odorant signaling and calcium permeability. The sequence is that of Putative odorant receptor 92a (Or92a) from Drosophila melanogaster (Fruit fly).